We begin with the raw amino-acid sequence, 2298 residues long: Protein Ycf2 (2298 aa).

1637–1644 is a binding site for ATP; the sequence is GSIGTGRS.

The protein belongs to the Ycf2 family.

Its subcellular location is the plastid. It localises to the chloroplast stroma. Its function is as follows. Probable ATPase of unknown function. Its presence in a non-photosynthetic plant (Epifagus virginiana) and experiments in tobacco indicate that it has an essential function which is probably not related to photosynthesis. The protein is Protein Ycf2 of Lotus japonicus (Lotus corniculatus var. japonicus).